The following is a 297-amino-acid chain: N-acetylmuramic acid 6-phosphate etherase (297 aa).

One can recognise an SIS domain in the interval 55–218; sequence ITKHFKQGGR…STGAMVGIGK (164 aa). Glutamate 83 (proton donor) is an active-site residue. Glutamate 114 is an active-site residue.

Belongs to the GCKR-like family. MurNAc-6-P etherase subfamily. As to quaternary structure, homodimer.

It carries out the reaction N-acetyl-D-muramate 6-phosphate + H2O = N-acetyl-D-glucosamine 6-phosphate + (R)-lactate. Its pathway is amino-sugar metabolism; N-acetylmuramate degradation. Specifically catalyzes the cleavage of the D-lactyl ether substituent of MurNAc 6-phosphate, producing GlcNAc 6-phosphate and D-lactate. The sequence is that of N-acetylmuramic acid 6-phosphate etherase from Oenococcus oeni (strain ATCC BAA-331 / PSU-1).